Here is a 188-residue protein sequence, read N- to C-terminus: SRP-independent targeting protein 3 (188 aa).

A helical membrane pass occupies residues 27-47 (TIIMYIRILYCSSIGISWIIY). Ser157 bears the Phosphoserine mark. The disordered stretch occupies residues 157-188 (SLFGGMGQTGPKTDKKSIEEAERAGNAGVKAE). Residues 168–179 (KTDKKSIEEAER) are compositionally biased toward basic and acidic residues.

Belongs to the PHO88 family. Interacts with ENV10/SND2. ENV10/SND2 and PHO88/SND3 form a complex with the translocon in the endoplasmic reticulum membrane.

The protein resides in the endoplasmic reticulum membrane. It is found in the mitochondrion. Functionally, functions in the SND pathway, a SRP (signal recognition particle) and GET (guided entry of tail-anchored proteins) independent pathway for targeting a broad range of substrate proteins to the endoplasmic reticulum. SND functions in parallel to GET in targeting proteins with downstream hydrophobic motifs. Involved in inorganic phosphate uptake. Also involved in telomere length regulation and maintenance. This is SRP-independent targeting protein 3 from Saccharomyces cerevisiae (strain ATCC 204508 / S288c) (Baker's yeast).